Reading from the N-terminus, the 164-residue chain is Lipoprotein signal peptidase (164 aa).

A run of 4 helical transmembrane segments spans residues 11–31 (YWVLALAAIVLDQWSKWAVLS), 41–61 (VIPSFFDLTLVYNPGAAFSFL), 64–84 (QGGWQKYFFLVLAVAVSAYLV), and 92–112 (FAALGKIGAAMIIGGASGNVI). Catalysis depends on residues D122 and D140. Residues 132–152 (FYPAFNIADSFICVGAVLAVL) form a helical membrane-spanning segment.

The protein belongs to the peptidase A8 family.

It localises to the cell inner membrane. It catalyses the reaction Release of signal peptides from bacterial membrane prolipoproteins. Hydrolyzes -Xaa-Yaa-Zaa-|-(S,diacylglyceryl)Cys-, in which Xaa is hydrophobic (preferably Leu), and Yaa (Ala or Ser) and Zaa (Gly or Ala) have small, neutral side chains.. Its pathway is protein modification; lipoprotein biosynthesis (signal peptide cleavage). Its function is as follows. This protein specifically catalyzes the removal of signal peptides from prolipoproteins. The polypeptide is Lipoprotein signal peptidase (Neisseria gonorrhoeae (strain ATCC 700825 / FA 1090)).